The chain runs to 139 residues: Nucleoside diphosphate kinase (139 aa).

Positions 9, 57, 85, 91, 102, and 112 each coordinate ATP. His-115 functions as the Pros-phosphohistidine intermediate in the catalytic mechanism.

Belongs to the NDK family. As to quaternary structure, homotetramer. The cofactor is Mg(2+).

It is found in the cytoplasm. The enzyme catalyses a 2'-deoxyribonucleoside 5'-diphosphate + ATP = a 2'-deoxyribonucleoside 5'-triphosphate + ADP. It carries out the reaction a ribonucleoside 5'-diphosphate + ATP = a ribonucleoside 5'-triphosphate + ADP. Its function is as follows. Major role in the synthesis of nucleoside triphosphates other than ATP. The ATP gamma phosphate is transferred to the NDP beta phosphate via a ping-pong mechanism, using a phosphorylated active-site intermediate. The polypeptide is Nucleoside diphosphate kinase (Exiguobacterium sp. (strain ATCC BAA-1283 / AT1b)).